Reading from the N-terminus, the 465-residue chain is Cysteine--tRNA ligase (465 aa).

Cys-29 provides a ligand contact to Zn(2+). Residues 31 to 41 carry the 'HIGH' region motif; it reads PTVYNYIHIGN. Zn(2+) is bound by residues Cys-209, His-234, and Glu-238. Positions 266-270 match the 'KMSKS' region motif; the sequence is KMSKS. Lys-269 lines the ATP pocket. The residue at position 270 (Ser-270) is a Phosphoserine.

It belongs to the class-I aminoacyl-tRNA synthetase family. As to quaternary structure, monomer. Requires Zn(2+) as cofactor.

The protein localises to the cytoplasm. The catalysed reaction is tRNA(Cys) + L-cysteine + ATP = L-cysteinyl-tRNA(Cys) + AMP + diphosphate. The sequence is that of Cysteine--tRNA ligase from Bacillus cereus (strain ATCC 10987 / NRS 248).